A 330-amino-acid chain; its full sequence is Ferredoxin--NADP reductase (330 aa).

Residues glutamate 35, glutamine 43, tyrosine 48, valine 90, phenylalanine 123, aspartate 285, and threonine 326 each contribute to the FAD site.

This sequence belongs to the ferredoxin--NADP reductase type 2 family. Homodimer. FAD is required as a cofactor.

It carries out the reaction 2 reduced [2Fe-2S]-[ferredoxin] + NADP(+) + H(+) = 2 oxidized [2Fe-2S]-[ferredoxin] + NADPH. The sequence is that of Ferredoxin--NADP reductase from Streptococcus pyogenes serotype M1.